The chain runs to 103 residues: Histone H4 (103 aa).

Over residues 1–14 (MSGRGKGGKGLGKG) the composition is skewed to gly residues. The disordered stretch occupies residues 1–20 (MSGRGKGGKGLGKGGAKRHR). At lysine 6 the chain carries N6-acetyl-N6-methyllysine; alternate. Lysine 6, lysine 9, and lysine 13 each carry N6-methyllysine; alternate. Lysine 13 is subject to N6-acetyl-N6-methyllysine; alternate. The DNA-binding element occupies 17 to 21 (KRHRK). An N6-glutaryllysine modification is found at lysine 92.

This sequence belongs to the histone H4 family. The nucleosome is a histone octamer containing two molecules each of H2A, H2B, H3 and H4 assembled in one H3-H4 heterotetramer and two H2A-H2B heterodimers. The octamer wraps approximately 147 bp of DNA. Glutarylation at Lys-92 (H4K91glu) destabilizes nucleosomes by promoting dissociation of the H2A-H2B dimers from nucleosomes.

The protein localises to the nucleus. Its subcellular location is the chromosome. In terms of biological role, core component of nucleosome. Nucleosomes wrap and compact DNA into chromatin, limiting DNA accessibility to the cellular machineries which require DNA as a template. Histones thereby play a central role in transcription regulation, DNA repair, DNA replication and chromosomal stability. DNA accessibility is regulated via a complex set of post-translational modifications of histones, also called histone code, and nucleosome remodeling. In Mycosarcoma maydis (Corn smut fungus), this protein is Histone H4 (HHF1).